Consider the following 292-residue polypeptide: Shikimate dehydrogenase (NADP(+)) (292 aa).

Shikimate is bound by residues 22-24 and serine 69; that span reads SLS. The active-site Proton acceptor is the lysine 73. 2 residues coordinate shikimate: asparagine 94 and aspartate 111. Residues 135 to 139 and isoleucine 236 contribute to the NADP(+) site; that span reads GVGGA. Tyrosine 238 lines the shikimate pocket. Residue glycine 260 coordinates NADP(+).

This sequence belongs to the shikimate dehydrogenase family. In terms of assembly, homodimer.

The enzyme catalyses shikimate + NADP(+) = 3-dehydroshikimate + NADPH + H(+). It functions in the pathway metabolic intermediate biosynthesis; chorismate biosynthesis; chorismate from D-erythrose 4-phosphate and phosphoenolpyruvate: step 4/7. Involved in the biosynthesis of the chorismate, which leads to the biosynthesis of aromatic amino acids. Catalyzes the reversible NADPH linked reduction of 3-dehydroshikimate (DHSA) to yield shikimate (SA). In Streptococcus pyogenes serotype M2 (strain MGAS10270), this protein is Shikimate dehydrogenase (NADP(+)).